The sequence spans 898 residues: Phosphoenolpyruvate carboxylase (898 aa).

Residues histidine 138 and lysine 561 contribute to the active site.

Belongs to the PEPCase type 1 family. It depends on Mg(2+) as a cofactor.

The catalysed reaction is oxaloacetate + phosphate = phosphoenolpyruvate + hydrogencarbonate. Functionally, forms oxaloacetate, a four-carbon dicarboxylic acid source for the tricarboxylic acid cycle. The protein is Phosphoenolpyruvate carboxylase of Streptococcus suis (strain 98HAH33).